Reading from the N-terminus, the 254-residue chain is Thiazole synthase (254 aa).

Lysine 95 functions as the Schiff-base intermediate with DXP in the catalytic mechanism. 1-deoxy-D-xylulose 5-phosphate is bound by residues glycine 156, 182–183 (AG), and 204–205 (NT).

This sequence belongs to the ThiG family. In terms of assembly, homotetramer. Forms heterodimers with either ThiH or ThiS.

The protein localises to the cytoplasm. It carries out the reaction [ThiS sulfur-carrier protein]-C-terminal-Gly-aminoethanethioate + 2-iminoacetate + 1-deoxy-D-xylulose 5-phosphate = [ThiS sulfur-carrier protein]-C-terminal Gly-Gly + 2-[(2R,5Z)-2-carboxy-4-methylthiazol-5(2H)-ylidene]ethyl phosphate + 2 H2O + H(+). It participates in cofactor biosynthesis; thiamine diphosphate biosynthesis. Functionally, catalyzes the rearrangement of 1-deoxy-D-xylulose 5-phosphate (DXP) to produce the thiazole phosphate moiety of thiamine. Sulfur is provided by the thiocarboxylate moiety of the carrier protein ThiS. In vitro, sulfur can be provided by H(2)S. In Shewanella oneidensis (strain ATCC 700550 / JCM 31522 / CIP 106686 / LMG 19005 / NCIMB 14063 / MR-1), this protein is Thiazole synthase.